The primary structure comprises 306 residues: UDP-N-acetylenolpyruvoylglucosamine reductase (306 aa).

An FAD-binding PCMH-type domain is found at 30–216 (RIGGPVPYIL…KSKLIDFSTR (187 aa)). Residue R180 is part of the active site. Residue S230 is the Proton donor of the active site. The active site involves E301.

This sequence belongs to the MurB family. FAD is required as a cofactor.

It localises to the cytoplasm. The catalysed reaction is UDP-N-acetyl-alpha-D-muramate + NADP(+) = UDP-N-acetyl-3-O-(1-carboxyvinyl)-alpha-D-glucosamine + NADPH + H(+). It participates in cell wall biogenesis; peptidoglycan biosynthesis. In terms of biological role, cell wall formation. This chain is UDP-N-acetylenolpyruvoylglucosamine reductase, found in Petrotoga mobilis (strain DSM 10674 / SJ95).